The following is a 363-amino-acid chain: Putative C-&gt;U-editing enzyme APOBEC-4 (363 aa).

The CMP/dCMP-type deaminase domain maps to 61–177; it reads PQTKHLTFYE…AWNREALRSL (117 aa). His-93 is a binding site for Zn(2+). Glu-95 (proton donor) is an active-site residue. Positions 127 and 134 each coordinate Zn(2+).

This sequence belongs to the cytidine and deoxycytidylate deaminase family. Zn(2+) serves as cofactor.

Its function is as follows. Putative C to U editing enzyme whose physiological substrate is not yet known. The polypeptide is Putative C-&gt;U-editing enzyme APOBEC-4 (APOBEC4) (Macaca fascicularis (Crab-eating macaque)).